Here is a 331-residue protein sequence, read N- to C-terminus: Endo-1,4-beta-xylanase 2 (331 aa).

The N-terminal stretch at 1–17 (MKASSVLLGLAPLAALA) is a signal peptide. Residues 31–329 (QQSIDALMKA…KPAYNSVVQA (299 aa)) enclose the GH10 domain. Residue asparagine 105 is glycosylated (N-linked (GlcNAc...) asparagine). Residue glutamate 159 is the Proton donor of the active site. Glutamate 266 serves as the catalytic Nucleophile. A disulfide bridge links cysteine 284 with cysteine 290. An N-linked (GlcNAc...) asparagine glycan is attached at asparagine 301.

It belongs to the glycosyl hydrolase 10 (cellulase F) family.

Its subcellular location is the secreted. It carries out the reaction Endohydrolysis of (1-&gt;4)-beta-D-xylosidic linkages in xylans.. It participates in glycan degradation; xylan degradation. Its function is as follows. Endo-1,4-beta-xylanase involved in the hydrolysis of xylan, a major structural heterogeneous polysaccharide found in plant biomass representing the second most abundant polysaccharide in the biosphere, after cellulose. Accounts for approximately 70 percent of the endoxylanase activity in the culture filtrate. The chain is Endo-1,4-beta-xylanase 2 (XYL2) from Pyricularia grisea (Crabgrass-specific blast fungus).